The following is a 286-amino-acid chain: Urease accessory protein UreD 2 (286 aa).

It belongs to the UreD family. As to quaternary structure, ureD, UreF and UreG form a complex that acts as a GTP-hydrolysis-dependent molecular chaperone, activating the urease apoprotein by helping to assemble the nickel containing metallocenter of UreC. The UreE protein probably delivers the nickel.

The protein resides in the cytoplasm. Its function is as follows. Required for maturation of urease via the functional incorporation of the urease nickel metallocenter. The sequence is that of Urease accessory protein UreD 2 from Bradyrhizobium sp. (strain BTAi1 / ATCC BAA-1182).